A 145-amino-acid chain; its full sequence is Peptide methionine sulfoxide reductase MsrB (145 aa).

Residues 6–129 enclose the MsrB domain; that stretch reads KNERLKQLTD…NSAALRFIPV (124 aa). Cysteine 118 acts as the Nucleophile in catalysis.

Belongs to the MsrB Met sulfoxide reductase family.

It catalyses the reaction L-methionyl-[protein] + [thioredoxin]-disulfide + H2O = L-methionyl-(R)-S-oxide-[protein] + [thioredoxin]-dithiol. This is Peptide methionine sulfoxide reductase MsrB from Listeria innocua serovar 6a (strain ATCC BAA-680 / CLIP 11262).